The following is a 311-amino-acid chain: Olfactory receptor 5L2 (311 aa).

Topologically, residues 1–25 (MGKENCTTVAEFILLGLSDVPELRV) are extracellular. Residue asparagine 5 is glycosylated (N-linked (GlcNAc...) asparagine). Residues 26–46 (CLFLLFLLIYGVTLLANLGMT) form a helical membrane-spanning segment. The Cytoplasmic segment spans residues 47–54 (ALIQVSSR). A helical membrane pass occupies residues 55-75 (LHTPVYFFLSHLSFVDFCYSS). Residues 76 to 99 (IIVPKMLANIFNKDKAISFLGCMV) lie on the Extracellular side of the membrane. A disulfide bridge links cysteine 97 with cysteine 189. Residues 100 to 120 (QFYLFCTCGVTEVFLLAVMAY) traverse the membrane as a helical segment. Residues 121 to 139 (DRFVAICNPLLYMVTMSQK) lie on the Cytoplasmic side of the membrane. The helical transmembrane segment at 140–160 (LRVELTSCCYFCGTVCSLIHS) threads the bilayer. Topologically, residues 161-196 (SLALRILFYRSNVINHFFCDLPPLLSLACSDVTVNE) are extracellular. The N-linked (GlcNAc...) asparagine glycan is linked to asparagine 195. Residues 197–217 (TLLFLVATLNESVTIMIILTS) traverse the membrane as a helical segment. Residues 218–237 (YLLILTTILKIHSAESRHKA) lie on the Cytoplasmic side of the membrane. Residues 238–258 (FSTCASHLTAITVSHGTILYI) traverse the membrane as a helical segment. Over 259 to 271 (YCRPSSGNSGDVD) the chain is Extracellular. A helical membrane pass occupies residues 272-292 (KVATVFYTVVIPMLNPLIYSL). Over 293–311 (RNKDVNKALRKVMGSKIHS) the chain is Cytoplasmic.

Belongs to the G-protein coupled receptor 1 family.

Its subcellular location is the cell membrane. Its function is as follows. Odorant receptor. This chain is Olfactory receptor 5L2 (OR5L2), found in Homo sapiens (Human).